The primary structure comprises 59 residues: Chromatin protein Cren7 (59 aa).

Belongs to the Cren7 family. As to quaternary structure, monomer. In terms of processing, methylated at multiple sites, to varying extents.

The protein localises to the chromosome. Its subcellular location is the cytoplasm. Its function is as follows. A chromatin protein, binds double-stranded DNA without sequence specificity. Constrains negative DNA supercoils. The chain is Chromatin protein Cren7 from Pyrobaculum neutrophilum (strain DSM 2338 / JCM 9278 / NBRC 100436 / V24Sta) (Thermoproteus neutrophilus).